A 635-amino-acid polypeptide reads, in one-letter code: 1-deoxy-D-xylulose-5-phosphate synthase (635 aa).

Residues histidine 79 and 120–122 contribute to the thiamine diphosphate site; that span reads GHS. Residue aspartate 151 participates in Mg(2+) binding. Residues 152-153, asparagine 182, tyrosine 291, and glutamate 372 each bind thiamine diphosphate; that span reads GA. Residue asparagine 182 participates in Mg(2+) binding.

It belongs to the transketolase family. DXPS subfamily. Homodimer. Mg(2+) is required as a cofactor. The cofactor is thiamine diphosphate.

The enzyme catalyses D-glyceraldehyde 3-phosphate + pyruvate + H(+) = 1-deoxy-D-xylulose 5-phosphate + CO2. It participates in metabolic intermediate biosynthesis; 1-deoxy-D-xylulose 5-phosphate biosynthesis; 1-deoxy-D-xylulose 5-phosphate from D-glyceraldehyde 3-phosphate and pyruvate: step 1/1. In terms of biological role, catalyzes the acyloin condensation reaction between C atoms 2 and 3 of pyruvate and glyceraldehyde 3-phosphate to yield 1-deoxy-D-xylulose-5-phosphate (DXP). The protein is 1-deoxy-D-xylulose-5-phosphate synthase of Xylella fastidiosa (strain M23).